A 219-amino-acid chain; its full sequence is 7-cyano-7-deazaguanine synthase (219 aa).

10 to 20 serves as a coordination point for ATP; the sequence is FSGGQDSTTCL. Zn(2+) is bound by residues Cys-188, Cys-196, Cys-199, and Cys-202.

The protein belongs to the QueC family. Requires Zn(2+) as cofactor.

The catalysed reaction is 7-carboxy-7-deazaguanine + NH4(+) + ATP = 7-cyano-7-deazaguanine + ADP + phosphate + H2O + H(+). The protein operates within purine metabolism; 7-cyano-7-deazaguanine biosynthesis. In terms of biological role, catalyzes the ATP-dependent conversion of 7-carboxy-7-deazaguanine (CDG) to 7-cyano-7-deazaguanine (preQ(0)). The polypeptide is 7-cyano-7-deazaguanine synthase (Neisseria meningitidis serogroup B (strain ATCC BAA-335 / MC58)).